The following is a 248-amino-acid chain: Cytochrome c oxidase subunit 2 (248 aa).

Over 1–39 the chain is Mitochondrial intermembrane; it reads MMKELLMNNMLNDVPTPWAMYFQDSATPNMEGIMELHNN. Residues 40–56 traverse the membrane as a helical segment; it reads VVFYLIIMLCFVTYMLY. The Mitochondrial matrix portion of the chain corresponds to 57–87; it reads NISTVYNKSAVAYKYMNHGQFIEMVWTTFPA. The helical transmembrane segment at 88-104 threads the bilayer; the sequence is VMLLIMAFPSFMLLYIC. At 105 to 248 the chain is on the mitochondrial intermembrane side; the sequence is DEVMAPAMTI…ADFLTWIDEQ (144 aa). Cu cation contacts are provided by His-183, Cys-218, Glu-220, Cys-222, His-226, and Met-229. Mg(2+) is bound at residue Glu-220.

It belongs to the cytochrome c oxidase subunit 2 family. In terms of assembly, component of the cytochrome c oxidase (complex IV, CIV), a multisubunit enzyme composed of a catalytic core of 3 subunits and several supernumerary subunits. The complex exists as a monomer or a dimer and forms supercomplexes (SCs) in the inner mitochondrial membrane with ubiquinol-cytochrome c oxidoreductase (cytochrome b-c1 complex, complex III, CIII). Cu cation is required as a cofactor.

The protein localises to the mitochondrion inner membrane. It catalyses the reaction 4 Fe(II)-[cytochrome c] + O2 + 8 H(+)(in) = 4 Fe(III)-[cytochrome c] + 2 H2O + 4 H(+)(out). In terms of biological role, component of the cytochrome c oxidase, the last enzyme in the mitochondrial electron transport chain which drives oxidative phosphorylation. The respiratory chain contains 3 multisubunit complexes succinate dehydrogenase (complex II, CII), ubiquinol-cytochrome c oxidoreductase (cytochrome b-c1 complex, complex III, CIII) and cytochrome c oxidase (complex IV, CIV), that cooperate to transfer electrons derived from NADH and succinate to molecular oxygen, creating an electrochemical gradient over the inner membrane that drives transmembrane transport and the ATP synthase. Cytochrome c oxidase is the component of the respiratory chain that catalyzes the reduction of oxygen to water. Electrons originating from reduced cytochrome c in the intermembrane space (IMS) are transferred via the dinuclear copper A center (CU(A)) of subunit 2 and heme A of subunit 1 to the active site in subunit 1, a binuclear center (BNC) formed by heme A3 and copper B (CU(B)). The BNC reduces molecular oxygen to 2 water molecules using 4 electrons from cytochrome c in the IMS and 4 protons from the mitochondrial matrix. This Brettanomyces naardenensis (Yeast) protein is Cytochrome c oxidase subunit 2 (COX2).